Here is a 247-residue protein sequence, read N- to C-terminus: Trypsin-2 (247 aa).

The first 15 residues, 1 to 15, serve as a signal peptide directing secretion; the sequence is MNLLLILTFVAAAVA. Residues 16 to 23 constitute a propeptide, activation peptide; it reads APFDDDDK. Positions 24–244 constitute a Peptidase S1 domain; the sequence is IVGGYICEEN…YVDWIKDTIA (221 aa). 4 cysteine pairs are disulfide-bonded: Cys-30–Cys-160, Cys-48–Cys-64, Cys-171–Cys-185, and Cys-196–Cys-220. The Charge relay system role is filled by His-63. Glu-75, Asn-77, Val-80, and Glu-85 together coordinate Ca(2+). Asp-107 (charge relay system) is an active-site residue. Tyr-154 is subject to Sulfotyrosine. Ser-200 serves as the catalytic Charge relay system.

It belongs to the peptidase S1 family. Ca(2+) is required as a cofactor. In terms of processing, sulfated on tyrosine. Sulfation at Tyr-154 increases selectivity towards basic versus apolar residues at the P2' position of inhibitors that bind in a substrate-like fashion. Although the increase in selectivity is relatively small, it may facilitate digestion of a broader range of dietary proteins. As to expression, expressed in Paneth cells, at the base of small intestinal crypts.

It is found in the secreted. The protein localises to the extracellular space. The catalysed reaction is Preferential cleavage: Arg-|-Xaa, Lys-|-Xaa.. Its function is as follows. In the ileum, may be involved in defensin processing, including DEFA5. The chain is Trypsin-2 (PRSS2) from Homo sapiens (Human).